The following is a 75-amino-acid chain: Putative membrane protein insertion efficiency factor (75 aa).

It belongs to the UPF0161 family.

Its subcellular location is the cell membrane. Functionally, could be involved in insertion of integral membrane proteins into the membrane. This chain is Putative membrane protein insertion efficiency factor, found in Bacillus cytotoxicus (strain DSM 22905 / CIP 110041 / 391-98 / NVH 391-98).